A 122-amino-acid chain; its full sequence is Small ribosomal subunit protein uS13 (122 aa).

A disordered region spans residues H92 to K122. A compositionally biased stretch (basic residues) spans Q101–K122.

This sequence belongs to the universal ribosomal protein uS13 family. In terms of assembly, part of the 30S ribosomal subunit. Forms a loose heterodimer with protein S19. Forms two bridges to the 50S subunit in the 70S ribosome.

In terms of biological role, located at the top of the head of the 30S subunit, it contacts several helices of the 16S rRNA. In the 70S ribosome it contacts the 23S rRNA (bridge B1a) and protein L5 of the 50S subunit (bridge B1b), connecting the 2 subunits; these bridges are implicated in subunit movement. Contacts the tRNAs in the A and P-sites. In Ruminiclostridium cellulolyticum (strain ATCC 35319 / DSM 5812 / JCM 6584 / H10) (Clostridium cellulolyticum), this protein is Small ribosomal subunit protein uS13.